Consider the following 53-residue polypeptide: Cytochrome c-552 (53 aa).

Heme c is bound by residues Cys19, Cys22, His23, and Met44.

Binds 1 heme c group covalently per subunit.

The protein localises to the cell membrane. The protein is Cytochrome c-552 of Schinkia azotoformans (Bacillus azotoformans).